A 441-amino-acid chain; its full sequence is Homoserine dehydrogenase (441 aa).

NADP(+) is bound by residues Asn-17 and Val-18. NAD(+) is bound by residues Val-18, Val-37, and Gly-47. Residue Val-18 coordinates NADPH. 3 residues coordinate NADP(+): Arg-49, Arg-50, and Lys-107. Arg-49 provides a ligand contact to NADPH. NADPH is bound at residue Lys-107. Na(+)-binding residues include Glu-131, Val-134, Gly-136, and Ile-138. The NADP(+) site is built by Gly-189 and Glu-192. L-homoserine is bound by residues Glu-192 and Asp-203. Catalysis depends on Lys-207, which acts as the Proton donor. Residue Gly-309 coordinates NADP(+). Gly-309 contacts NAD(+). Gly-309 is an NADPH binding site. An ACT domain is found at 356-435 (YVSMNVADKP…VVQGVSSVIR (80 aa)).

Belongs to the homoserine dehydrogenase family. It depends on a metal cation as a cofactor.

It catalyses the reaction L-homoserine + NADP(+) = L-aspartate 4-semialdehyde + NADPH + H(+). The enzyme catalyses L-homoserine + NAD(+) = L-aspartate 4-semialdehyde + NADH + H(+). It participates in amino-acid biosynthesis; L-methionine biosynthesis via de novo pathway; L-homoserine from L-aspartate: step 3/3. The protein operates within amino-acid biosynthesis; L-threonine biosynthesis; L-threonine from L-aspartate: step 3/5. Its function is as follows. Catalyzes the conversion of L-aspartate-beta-semialdehyde (L-Asa) to L-homoserine (L-Hse), the third step in the biosynthesis of threonine and methionine from aspartate. In Mycobacterium tuberculosis (strain CDC 1551 / Oshkosh), this protein is Homoserine dehydrogenase (hom).